We begin with the raw amino-acid sequence, 361 residues long: Histidinol-phosphate aminotransferase (361 aa).

Position 218 is an N6-(pyridoxal phosphate)lysine (K218).

The protein belongs to the class-II pyridoxal-phosphate-dependent aminotransferase family. Histidinol-phosphate aminotransferase subfamily. Homodimer. Requires pyridoxal 5'-phosphate as cofactor.

The catalysed reaction is L-histidinol phosphate + 2-oxoglutarate = 3-(imidazol-4-yl)-2-oxopropyl phosphate + L-glutamate. The protein operates within amino-acid biosynthesis; L-histidine biosynthesis; L-histidine from 5-phospho-alpha-D-ribose 1-diphosphate: step 7/9. This chain is Histidinol-phosphate aminotransferase, found in Ruegeria pomeroyi (strain ATCC 700808 / DSM 15171 / DSS-3) (Silicibacter pomeroyi).